We begin with the raw amino-acid sequence, 591 residues long: Alpha-(1-&gt;6)-mannopyranosyltransferase Rv1459c (591 aa).

The next 13 helical transmembrane spans lie at 40–60 (FGATGTVLMAIGALGAGARPV), 80–100 (VSLTMTTTGAVMMALAWLMLG), 117–137 (TLLLWMLPLLIAPPMYSKDVY), 201–221 (IVAAVLCHRLVVLIGVTLIVW), 235–255 (VSALWLGAANPLLIMHLVAGI), 259–279 (ALMLGLMLTGVEFALRGLDMA), 321–341 (EWGPLAMLLAGSILITLSSQV), 367–387 (LLLAAAVMASLTLAIMAILGW), 408–428 (WMSPPTLLALGTGHVGILLGL), 441–461 (AIGVLIITVMVCWLLLAVLRG), 473–493 (LAVTVLLFPVVQPWYLLWAII), 502–522 (PGFRVAAILATLIVGIFGPTA), and 527–547 (FALFQIVDATAASAIIVILLI). Positions 569–591 (ESASKTPATRRPTAAPDAYADST) are disordered. Residues 574 to 584 (TPATRRPTAAP) show a composition bias toward low complexity.

It belongs to the MptA/B family.

It is found in the membrane. Its function is as follows. Catalyzes the addition of alpha-(1-&gt;6)-mannose residue. The sequence is that of Alpha-(1-&gt;6)-mannopyranosyltransferase Rv1459c from Mycobacterium tuberculosis (strain ATCC 25618 / H37Rv).